Here is a 923-residue protein sequence, read N- to C-terminus: Glucosidase 2 subunit alpha (923 aa).

The signal sequence occupies residues 1-25; that stretch reads MRYHGICWFIFQAAIIFAIFGSCQG. N262 is a glycosylation site (N-linked (GlcNAc...) asparagine). D524 serves as the catalytic Nucleophile. E527 is an active-site residue. An N-linked (GlcNAc...) asparagine glycan is attached at N563. D600 (proton donor) is an active-site residue. N822 carries N-linked (GlcNAc...) asparagine glycosylation.

This sequence belongs to the glycosyl hydrolase 31 family. As to quaternary structure, heterodimer of a catalytic subunit alpha (gls2) and a subunit beta (gtb1).

It is found in the endoplasmic reticulum. It carries out the reaction N(4)-(alpha-D-Glc-(1-&gt;3)-alpha-D-Man-(1-&gt;2)-alpha-D-Man-(1-&gt;2)-alpha-D-Man-(1-&gt;3)-[alpha-D-Man-(1-&gt;2)-alpha-D-Man-(1-&gt;3)-[alpha-D-Man-(1-&gt;2)-alpha-D-Man-(1-&gt;6)]-alpha-D-Man-(1-&gt;6)]-beta-D-Man-(1-&gt;4)-beta-D-GlcNAc-(1-&gt;4)-beta-D-GlcNAc)-L-asparaginyl-[protein] + H2O = N(4)-(alpha-D-Man-(1-&gt;2)-alpha-D-Man-(1-&gt;2)-alpha-D-Man-(1-&gt;3)-[alpha-D-Man-(1-&gt;2)-alpha-D-Man-(1-&gt;3)-[alpha-D-Man-(1-&gt;2)-alpha-D-Man-(1-&gt;6)]-alpha-D-Man-(1-&gt;6)]-beta-D-Man-(1-&gt;4)-beta-D-GlcNAc-(1-&gt;4)-beta-D-GlcNAc)-L-asparaginyl-[protein] (N-glucan mannose isomer 9A1,2,3B1,2,3) + beta-D-glucose. The enzyme catalyses N(4)-(alpha-D-Glc-(1-&gt;3)-alpha-D-Glc-(1-&gt;3)-alpha-D-Man-(1-&gt;2)-alpha-D-Man-(1-&gt;2)-alpha-D-Man-(1-&gt;3)-[alpha-D-Man-(1-&gt;2)-alpha-D-Man-(1-&gt;3)-[alpha-D-Man-(1-&gt;2)-alpha-D-Man-(1-&gt;6)]-alpha-D-Man-(1-&gt;6)]-beta-D-Man-(1-&gt;4)-beta-D-GlcNAc-(1-&gt;4)-beta-D-GlcNAc)-L-asparaginyl-[protein] + H2O = N(4)-(alpha-D-Glc-(1-&gt;3)-alpha-D-Man-(1-&gt;2)-alpha-D-Man-(1-&gt;2)-alpha-D-Man-(1-&gt;3)-[alpha-D-Man-(1-&gt;2)-alpha-D-Man-(1-&gt;3)-[alpha-D-Man-(1-&gt;2)-alpha-D-Man-(1-&gt;6)]-alpha-D-Man-(1-&gt;6)]-beta-D-Man-(1-&gt;4)-beta-D-GlcNAc-(1-&gt;4)-beta-D-GlcNAc)-L-asparaginyl-[protein] + beta-D-glucose. The protein operates within glycan metabolism; N-glycan metabolism. Functionally, catalytic subunit of glucosidase 2, which cleaves sequentially the 2 innermost alpha-1,3-linked glucose residues from the Glc(2)Man(9)GlcNAc(2) oligosaccharide precursor of immature glycoproteins. In Schizosaccharomyces pombe (strain 972 / ATCC 24843) (Fission yeast), this protein is Glucosidase 2 subunit alpha.